A 29-amino-acid chain; its full sequence is Myosin heavy chain, muscle (29 aa).

Basic and acidic residues predominate over residues 1-16 (SKYESEGVARSEELQE). The segment at 1-29 (SKYESEGVARSEELQEVHQAFADAGRKPI) is disordered.

In terms of assembly, muscle myosin is a hexameric protein that consists of 2 heavy chain subunits (MHC), 2 alkali light chain subunits (MLC) and 2 regulatory light chain subunits (MLC-2).

Its subcellular location is the cytoplasm. The protein localises to the myofibril. Muscle contraction. The polypeptide is Myosin heavy chain, muscle (Bombyx mori (Silk moth)).